A 24-amino-acid polypeptide reads, in one-letter code: Grammistin Pp 4b (24 aa).

Exists as aggregates of 3-4 molecules. As to expression, expressed by the skin glands.

It is found in the secreted. Its function is as follows. Thanks to its abundant amphiphilic alpha-helices, it may integrate into membrane phospholipids, leading to lysis of the membrane. Its hemolytic activity is inhibited by phospholipids, but not by cholesterol. Has antibacterial activity with a broad spectrum against various species of bacteria including both Gram-positive and Gram-negative groups. Also has ichthyotoxic activity. This is Grammistin Pp 4b from Pogonoperca punctata (Clown grouper).